The chain runs to 423 residues: UPF0229 protein Pmen_4018 (423 aa).

Residues 65–108 form a disordered region; that stretch reads HHGRGGKQTIVHPGNKEFTAGERIPRPQGGGGGRGSGKASNSGE.

Belongs to the UPF0229 family.

In Ectopseudomonas mendocina (strain ymp) (Pseudomonas mendocina), this protein is UPF0229 protein Pmen_4018.